Consider the following 216-residue polypeptide: Glycerol-3-phosphate acyltransferase 3 (216 aa).

5 helical membrane-spanning segments follow: residues 6–26 (LLLV…YLVS), 58–78 (LVAS…GLVI), 92–112 (LLFA…WPVF), 125–145 (FGGM…VLII), and 158–178 (ITGV…SGFP).

This sequence belongs to the PlsY family. As to quaternary structure, probably interacts with PlsX.

Its subcellular location is the cell membrane. The enzyme catalyses an acyl phosphate + sn-glycerol 3-phosphate = a 1-acyl-sn-glycero-3-phosphate + phosphate. Its pathway is lipid metabolism; phospholipid metabolism. Functionally, catalyzes the transfer of an acyl group from acyl-phosphate (acyl-PO(4)) to glycerol-3-phosphate (G3P) to form lysophosphatidic acid (LPA). This enzyme utilizes acyl-phosphate as fatty acyl donor, but not acyl-CoA or acyl-ACP. The polypeptide is Glycerol-3-phosphate acyltransferase 3 (Dehalococcoides mccartyi (strain CBDB1)).